The following is a 169-amino-acid chain: Ureidoglycolate lyase (169 aa).

The protein belongs to the ureidoglycolate lyase family. Homodimer. It depends on Ni(2+) as a cofactor.

It carries out the reaction (S)-ureidoglycolate = urea + glyoxylate. The protein operates within nitrogen metabolism; (S)-allantoin degradation. Catalyzes the catabolism of the allantoin degradation intermediate (S)-ureidoglycolate, generating urea and glyoxylate. Involved in the utilization of allantoin as nitrogen source. In Brucella abortus biovar 1 (strain 9-941), this protein is Ureidoglycolate lyase.